We begin with the raw amino-acid sequence, 484 residues long: tRNA sulfurtransferase (484 aa).

Residues 61–165 form the THUMP domain; the sequence is ILLVELLGRI…NDKMMLIKAR (105 aa). ATP-binding positions include 183 to 184, K265, G287, and Q296; that span reads LI. C344 and C456 are disulfide-bonded. A Rhodanese domain is found at 404–484; that stretch reads LSANDVILDI…DNVKVLNKIS (81 aa). C456 acts as the Cysteine persulfide intermediate in catalysis.

The protein belongs to the ThiI family.

The protein localises to the cytoplasm. The enzyme catalyses [ThiI sulfur-carrier protein]-S-sulfanyl-L-cysteine + a uridine in tRNA + 2 reduced [2Fe-2S]-[ferredoxin] + ATP + H(+) = [ThiI sulfur-carrier protein]-L-cysteine + a 4-thiouridine in tRNA + 2 oxidized [2Fe-2S]-[ferredoxin] + AMP + diphosphate. It catalyses the reaction [ThiS sulfur-carrier protein]-C-terminal Gly-Gly-AMP + S-sulfanyl-L-cysteinyl-[cysteine desulfurase] + AH2 = [ThiS sulfur-carrier protein]-C-terminal-Gly-aminoethanethioate + L-cysteinyl-[cysteine desulfurase] + A + AMP + 2 H(+). It functions in the pathway cofactor biosynthesis; thiamine diphosphate biosynthesis. Functionally, catalyzes the ATP-dependent transfer of a sulfur to tRNA to produce 4-thiouridine in position 8 of tRNAs, which functions as a near-UV photosensor. Also catalyzes the transfer of sulfur to the sulfur carrier protein ThiS, forming ThiS-thiocarboxylate. This is a step in the synthesis of thiazole, in the thiamine biosynthesis pathway. The sulfur is donated as persulfide by IscS. The sequence is that of tRNA sulfurtransferase from Histophilus somni (strain 129Pt) (Haemophilus somnus).